The primary structure comprises 264 residues: Thymidylate synthase (264 aa).

A dUMP-binding site is contributed by R21. Residue H51 coordinates (6R)-5,10-methylene-5,6,7,8-tetrahydrofolate. Residue 126 to 127 (RR) coordinates dUMP. The Nucleophile role is filled by C146. DUMP-binding positions include 166–169 (RSAD), N177, and 207–209 (HIY). D169 lines the (6R)-5,10-methylene-5,6,7,8-tetrahydrofolate pocket. (6R)-5,10-methylene-5,6,7,8-tetrahydrofolate is bound at residue A263.

The protein belongs to the thymidylate synthase family. Bacterial-type ThyA subfamily. In terms of assembly, homodimer.

It is found in the cytoplasm. The catalysed reaction is dUMP + (6R)-5,10-methylene-5,6,7,8-tetrahydrofolate = 7,8-dihydrofolate + dTMP. It participates in pyrimidine metabolism; dTTP biosynthesis. In terms of biological role, catalyzes the reductive methylation of 2'-deoxyuridine-5'-monophosphate (dUMP) to 2'-deoxythymidine-5'-monophosphate (dTMP) while utilizing 5,10-methylenetetrahydrofolate (mTHF) as the methyl donor and reductant in the reaction, yielding dihydrofolate (DHF) as a by-product. This enzymatic reaction provides an intracellular de novo source of dTMP, an essential precursor for DNA biosynthesis. This Rhizobium meliloti (strain 1021) (Ensifer meliloti) protein is Thymidylate synthase.